A 119-amino-acid chain; its full sequence is Holo-[acyl-carrier-protein] synthase (119 aa).

Mg(2+) is bound by residues aspartate 8 and glutamate 58.

This sequence belongs to the P-Pant transferase superfamily. AcpS family. Mg(2+) serves as cofactor.

It localises to the cytoplasm. The catalysed reaction is apo-[ACP] + CoA = holo-[ACP] + adenosine 3',5'-bisphosphate + H(+). Transfers the 4'-phosphopantetheine moiety from coenzyme A to a Ser of acyl-carrier-protein. This chain is Holo-[acyl-carrier-protein] synthase, found in Geobacillus sp. (strain WCH70).